The following is a 324-amino-acid chain: Methenyltetrahydromethanopterin cyclohydrolase (324 aa).

Belongs to the MCH family.

It localises to the cytoplasm. It catalyses the reaction 5,10-methenyl-5,6,7,8-tetrahydromethanopterin + H2O = N(5)-formyl-5,6,7,8-tetrahydromethanopterin + H(+). It participates in one-carbon metabolism; methanogenesis from CO(2); 5,10-methenyl-5,6,7,8-tetrahydromethanopterin from CO(2): step 3/3. Functionally, catalyzes the reversible interconversion of 5-formyl-H(4)MPT to methenyl-H(4)MPT(+). The chain is Methenyltetrahydromethanopterin cyclohydrolase from Methanococcus aeolicus (strain ATCC BAA-1280 / DSM 17508 / OCM 812 / Nankai-3).